The chain runs to 451 residues: Ubiquinone biosynthesis monooxygenase COQ6, mitochondrial (451 aa).

This sequence belongs to the UbiH/COQ6 family. As to quaternary structure, component of a multi-subunit COQ enzyme complex. FAD is required as a cofactor.

It is found in the mitochondrion inner membrane. It carries out the reaction a 4-hydroxy-3-(all-trans-polyprenyl)benzoate + 2 reduced [2Fe-2S]-[ferredoxin] + O2 + 2 H(+) = a 3,4-dihydroxy-5-(all-trans-polyprenyl)benzoate + 2 oxidized [2Fe-2S]-[ferredoxin] + H2O. The enzyme catalyses a 2-methoxy-6-(all-trans-polyprenyl)phenol + 2 reduced [2Fe-2S]-[ferredoxin] + O2 + 2 H(+) = a 2-methoxy-6-(all-trans-polyprenyl)benzene-1,4-diol + 2 oxidized [2Fe-2S]-[ferredoxin] + H2O. Its pathway is cofactor biosynthesis; ubiquinone biosynthesis. Functionally, FAD-dependent monooxygenase required for two non-consecutive steps during ubiquinone biosynthesis. Required for the C5-ring hydroxylation during ubiquinone biosynthesis by catalyzing the hydroxylation of 4-hydroxy-3-(all-trans-polyprenyl)benzoic acid to 3,4-dihydroxy-5-(all-trans-polyprenyl)benzoic acid. Also acts downstream of coq4, for the C1-hydroxylation during ubiquinone biosynthesis by catalyzing the hydroxylation of 2-methoxy-6-(all-trans-polyprenyl)phenol to 2-methoxy-6-(all-trans-polyprenyl)benzene-1,4-diol. The electrons required for the hydroxylation reaction are funneled indirectly to coq-6 from NADPH via a ferredoxin/ferredoxin reductase system. The sequence is that of Ubiquinone biosynthesis monooxygenase COQ6, mitochondrial from Caenorhabditis elegans.